A 202-amino-acid chain; its full sequence is uncharacterized protein (202 aa).

Residues 18 to 38 (FLIFLIFLSVLGCGITISGCI) traverse the membrane as a helical segment.

It localises to the membrane. This is an uncharacterized protein from Methanocaldococcus jannaschii (strain ATCC 43067 / DSM 2661 / JAL-1 / JCM 10045 / NBRC 100440) (Methanococcus jannaschii).